The primary structure comprises 1499 residues: DNA-directed RNA polymerase subunit beta' (1499 aa).

Zn(2+) is bound by residues C67, C69, C82, and C85. Mg(2+)-binding residues include D497, D499, and D501. C865, C940, C947, and C950 together coordinate Zn(2+). The interval 1475–1499 (YEPSQRAYQEDEYAKKEDGEIAIDD) is disordered. Residues 1482-1493 (YQEDEYAKKEDG) are compositionally biased toward basic and acidic residues.

Belongs to the RNA polymerase beta' chain family. As to quaternary structure, the RNAP catalytic core consists of 2 alpha, 1 beta, 1 beta' and 1 omega subunit. When a sigma factor is associated with the core the holoenzyme is formed, which can initiate transcription. It depends on Mg(2+) as a cofactor. Zn(2+) serves as cofactor.

It catalyses the reaction RNA(n) + a ribonucleoside 5'-triphosphate = RNA(n+1) + diphosphate. Functionally, DNA-dependent RNA polymerase catalyzes the transcription of DNA into RNA using the four ribonucleoside triphosphates as substrates. This Chloroherpeton thalassium (strain ATCC 35110 / GB-78) protein is DNA-directed RNA polymerase subunit beta'.